The chain runs to 499 residues: Spore germination protein GerQA (499 aa).

A run of 3 helical transmembrane segments spans residues 285–305, 376–396, and 409–429; these read LFAF…LTYH, SNVL…APIY, and FIIS…SLLL.

Belongs to the GerABKA family.

It localises to the membrane. Its function is as follows. Required for the germination response to inosine. Has no role in L-alanine germination. In Bacillus cereus, this protein is Spore germination protein GerQA (gerQA).